Here is a 295-residue protein sequence, read N- to C-terminus: Sulfotransferase 1A3 (295 aa).

Residue 48–53 coordinates 3'-phosphoadenylyl sulfate; sequence KSGTTW. Residues aspartate 86 and 106 to 108 each bind dopamine; that span reads KSH. Residue histidine 108 is the Proton acceptor of the active site. 3'-phosphoadenylyl sulfate-binding residues include arginine 130 and serine 138. Position 146 (glutamate 146) interacts with dopamine. 3'-phosphoadenylyl sulfate-binding positions include tyrosine 193, 227–232, and 257–259; these read TSFKEM and RKG.

The protein belongs to the sulfotransferase 1 family. As to quaternary structure, homodimer. The N-terminus is blocked. Liver, colon, kidney, lung, brain, spleen, small intestine, placenta and leukocyte.

It is found in the cytoplasm. The enzyme catalyses a phenol + 3'-phosphoadenylyl sulfate = an aryl sulfate + adenosine 3',5'-bisphosphate + H(+). It carries out the reaction 4-nitrophenol + 3'-phosphoadenylyl sulfate = 4-nitrophenyl sulfate + adenosine 3',5'-bisphosphate. The catalysed reaction is dopamine + 3'-phosphoadenylyl sulfate = dopamine 3-O-sulfate + adenosine 3',5'-bisphosphate + H(+). It catalyses the reaction dopamine + 3'-phosphoadenylyl sulfate = dopamine 4-O-sulfate + adenosine 3',5'-bisphosphate + H(+). The enzyme catalyses serotonin + 3'-phosphoadenylyl sulfate = serotonin O-sulfate + adenosine 3',5'-bisphosphate + H(+). It carries out the reaction (R)-adrenaline + 3'-phosphoadenylyl sulfate = (R)-adrenaline 4'-O-sulfate + adenosine 3',5'-bisphosphate + H(+). The catalysed reaction is (R)-noradrenaline + 3'-phosphoadenylyl sulfate = (R)-noradrenaline 4'-O-sulfate + adenosine 3',5'-bisphosphate + H(+). It catalyses the reaction 3,3',5-triiodo-L-thyronine + 3'-phosphoadenylyl sulfate = 3,3',5-triiodo-L-thyronine sulfate + adenosine 3',5'-bisphosphate + H(+). The enzyme catalyses 3,3',5'-triiodo-L-thyronine + 3'-phosphoadenylyl sulfate = 3,3',5'-triiodo-L-thyronine sulfate + adenosine 3',5'-bisphosphate + H(+). It carries out the reaction 3,3'-diiodo-L-thyronine + 3'-phosphoadenylyl sulfate = 3,3'-diiodo-L-thyronine sulfate + adenosine 3',5'-bisphosphate + H(+). The catalysed reaction is L-thyroxine + 3'-phosphoadenylyl sulfate = L-thyroxine sulfate + adenosine 3',5'-bisphosphate + H(+). In terms of biological role, sulfotransferase that utilizes 3'-phospho-5'-adenylyl sulfate (PAPS) as sulfonate donor to catalyze the sulfate conjugation of phenolic monoamines (neurotransmitters such as dopamine, (R)-adrenaline/epinephrine, (R)-noradrenaline/norepinephrine and serotonin) and phenolic and catechol drugs. Catalyzes the sulfation of T4 (L-thyroxine/3,5,3',5'-tetraiodothyronine), T3 (3,5,3'-triiodothyronine), rT3 (3,3',5'-triiodothyronine) and 3,3'-T2 (3,3'-diiodothyronine), with a substrate preference of 3,3'-T2 &gt; rT3 &gt; T3 &gt; T4. The protein is Sulfotransferase 1A3 (SULT1A3) of Homo sapiens (Human).